The chain runs to 200 residues: Probable gluconokinase (200 aa).

34–41 (GVSGSGKT) provides a ligand contact to ATP.

Belongs to the gluconokinase GntK/GntV family.

It catalyses the reaction D-gluconate + ATP = 6-phospho-D-gluconate + ADP + H(+). The protein operates within carbohydrate acid metabolism; D-gluconate degradation. The sequence is that of Probable gluconokinase from Dictyostelium discoideum (Social amoeba).